The chain runs to 675 residues: INO80 complex subunit D (675 aa).

Disordered regions lie at residues 1–39 (MNNNSNNNNNNNIDQKNETTNEITNNTSNNNNIINNVNQ), 183–203 (TGNNNNNTTTTTTTTTTNSTP), 274–324 (LKQK…ERQV), 473–523 (DSNK…KLNK), and 627–675 (VPVT…TMIS). 3 stretches are compositionally biased toward low complexity: residues 282–318 (QQLQNQKMFEQSQQQDQQQKPVQQPIQQQQQQDQLQI), 482–519 (NNDNNINNNNNNNNNNNNNNNNNNNNNNNNNNNNNNNN), and 634–648 (NQNNQNNNNNNTNNS). A compositionally biased stretch (basic and acidic residues) spans 664-675 (EILKDSDNTMIS).

It belongs to the INO80D family. As to quaternary structure, component of the chromatin-remodeling INO80 complex.

It localises to the nucleus. Putative regulatory component of the chromatin remodeling INO80 complex which is involved in transcriptional regulation, DNA replication and probably DNA repair. In Dictyostelium discoideum (Social amoeba), this protein is INO80 complex subunit D.